A 139-amino-acid chain; its full sequence is Mannose-specific lectin (139 aa).

Residues 1–109 (DNILYSGETL…ARWATGTNIH (109 aa)) enclose the Bulb-type lectin domain. The alpha-D-mannopyranose site is built by Gln26, Asp28, Asn30, Tyr34, Asp37, Lys38, Trp41, Ala42, Asn44, Gln57, Asp59, Asn61, Tyr65, Ile72, Trp73, Asn76, Asn83, Gln89, Asp91, Asn93, Tyr97, and Trp102. Cys29 and Cys52 are oxidised to a cystine.

As to quaternary structure, homotetramer; antiparallel. In terms of tissue distribution, detected in bulbs (at protein level).

Its subcellular location is the secreted. Its function is as follows. Mannose-specific lectin. Displays antiviral activity and therefore may contribute to defense against infections. Shows agglutinating activity towards rabbit erythrocytes. The sequence is that of Mannose-specific lectin from Narcissus tazetta (Cream narcissus).